An 84-amino-acid chain; its full sequence is Small ribosomal subunit protein bS16 (84 aa).

Belongs to the bacterial ribosomal protein bS16 family.

This is Small ribosomal subunit protein bS16 from Dechloromonas aromatica (strain RCB).